The following is a 418-amino-acid chain: MRFSAVSRHHRGASIDPMTFSEATTPDALTPDAHTPRLLTCDVLYTGMGGAQSPGGVVVVGETVAAAGHPDELRRQYPHAAEERAGAVIAPPPVNAHTHLDMSAYEFQALPYFQWIPEVVIRGRHLRGVAAAQAGADTLTRLGAGGVGDIVWAPEVMDALLAREDLSGTLYFEVLNPFPDKADEVFAAARTHLERWRRLERPGLRLGLSPHTPFTVSHRLMRLLSDYAAGEGLPLQIHVAEHPTELEMFRTGGGPLWDNRMPALYPHTLAEVIGREPGPDLTPVRYLDELGVLAARPTLVHMVNVTPDDIARVARAGCAVVTCPRSNHHLECGTFDWPAFAAAGVEVALGTDSVASGETLNVREEVTFARQLYPGLDPRVLVRAAVKGGQRVVGGRTPFLRRGETWQEGFRWELSRDL.

Zn(2+)-binding residues include His97 and His99. Residues Glu173 and His211 each contribute to the substrate site. Position 238 (His238) interacts with Zn(2+). Glu241 serves as the catalytic Proton donor. Zn(2+) is bound at residue Asp352.

This sequence belongs to the metallo-dependent hydrolases superfamily. The cofactor is Zn(2+).

The catalysed reaction is 6-amino-6-deoxyfutalosine + H2O + H(+) = futalosine + NH4(+). It participates in quinol/quinone metabolism; menaquinone biosynthesis. Catalyzes the deamination of aminodeoxyfutalosine (AFL) into futalosine (FL). To a lesser extent, can also deaminate 5'-deoxyadenosine, 5'-methylthioadenosine, 2'-deoxyadenosine, adenosine, 1-(6-amino-9H-purin-9-yl)-1-deoxy-N-ethyl-beta-D-ribofuranuronamide (NECA), and S-adenosylhomocysteine. The protein is Aminodeoxyfutalosine deaminase of Deinococcus radiodurans (strain ATCC 13939 / DSM 20539 / JCM 16871 / CCUG 27074 / LMG 4051 / NBRC 15346 / NCIMB 9279 / VKM B-1422 / R1).